Here is a 454-residue protein sequence, read N- to C-terminus: Bifunctional protein GlmU (454 aa).

Positions 1-225 are pyrophosphorylase; the sequence is MNIVILAAGM…VWETLGVNSK (225 aa). UDP-N-acetyl-alpha-D-glucosamine-binding positions include 6 to 9, lysine 20, glutamine 71, 76 to 77, 98 to 100, glycine 135, glutamate 150, asparagine 165, and asparagine 223; these read LAAG, GT, and YGD. Aspartate 100 is a binding site for Mg(2+). Asparagine 223 provides a ligand contact to Mg(2+). Residues 226-246 form a linker region; that stretch reads LQLAEVERIHQGNQARRLLEA. The interval 247 to 454 is N-acetyltransferase; the sequence is GVTLLDPARI…WQRPVKQPKQ (208 aa). Residues arginine 329 and lysine 347 each contribute to the UDP-N-acetyl-alpha-D-glucosamine site. Histidine 359 acts as the Proton acceptor in catalysis. 2 residues coordinate UDP-N-acetyl-alpha-D-glucosamine: tyrosine 362 and asparagine 373. Residues alanine 376, 382 to 383, serine 401, alanine 419, and arginine 436 contribute to the acetyl-CoA site; that span reads NY.

This sequence in the N-terminal section; belongs to the N-acetylglucosamine-1-phosphate uridyltransferase family. In the C-terminal section; belongs to the transferase hexapeptide repeat family. As to quaternary structure, homotrimer. The cofactor is Mg(2+).

The protein localises to the cytoplasm. It carries out the reaction alpha-D-glucosamine 1-phosphate + acetyl-CoA = N-acetyl-alpha-D-glucosamine 1-phosphate + CoA + H(+). The catalysed reaction is N-acetyl-alpha-D-glucosamine 1-phosphate + UTP + H(+) = UDP-N-acetyl-alpha-D-glucosamine + diphosphate. It participates in nucleotide-sugar biosynthesis; UDP-N-acetyl-alpha-D-glucosamine biosynthesis; N-acetyl-alpha-D-glucosamine 1-phosphate from alpha-D-glucosamine 6-phosphate (route II): step 2/2. The protein operates within nucleotide-sugar biosynthesis; UDP-N-acetyl-alpha-D-glucosamine biosynthesis; UDP-N-acetyl-alpha-D-glucosamine from N-acetyl-alpha-D-glucosamine 1-phosphate: step 1/1. Its pathway is bacterial outer membrane biogenesis; LPS lipid A biosynthesis. In terms of biological role, catalyzes the last two sequential reactions in the de novo biosynthetic pathway for UDP-N-acetylglucosamine (UDP-GlcNAc). The C-terminal domain catalyzes the transfer of acetyl group from acetyl coenzyme A to glucosamine-1-phosphate (GlcN-1-P) to produce N-acetylglucosamine-1-phosphate (GlcNAc-1-P), which is converted into UDP-GlcNAc by the transfer of uridine 5-monophosphate (from uridine 5-triphosphate), a reaction catalyzed by the N-terminal domain. The protein is Bifunctional protein GlmU of Cupriavidus taiwanensis (strain DSM 17343 / BCRC 17206 / CCUG 44338 / CIP 107171 / LMG 19424 / R1) (Ralstonia taiwanensis (strain LMG 19424)).